The sequence spans 251 residues: Hydroxyacylglutathione hydrolase (251 aa).

Residues histidine 53, histidine 55, aspartate 57, histidine 58, histidine 110, aspartate 127, and histidine 165 each coordinate Zn(2+).

The protein belongs to the metallo-beta-lactamase superfamily. Glyoxalase II family. As to quaternary structure, monomer. The cofactor is Zn(2+).

It carries out the reaction an S-(2-hydroxyacyl)glutathione + H2O = a 2-hydroxy carboxylate + glutathione + H(+). The protein operates within secondary metabolite metabolism; methylglyoxal degradation; (R)-lactate from methylglyoxal: step 2/2. In terms of biological role, thiolesterase that catalyzes the hydrolysis of S-D-lactoyl-glutathione to form glutathione and D-lactic acid. This Salmonella agona (strain SL483) protein is Hydroxyacylglutathione hydrolase.